The sequence spans 414 residues: Histidine--tRNA ligase (414 aa).

Belongs to the class-II aminoacyl-tRNA synthetase family. In terms of assembly, homodimer.

It localises to the cytoplasm. It catalyses the reaction tRNA(His) + L-histidine + ATP = L-histidyl-tRNA(His) + AMP + diphosphate + H(+). The polypeptide is Histidine--tRNA ligase (Rickettsia africae (strain ESF-5)).